A 296-amino-acid polypeptide reads, in one-letter code: 4-hydroxy-tetrahydrodipicolinate synthase (296 aa).

Thr-49 contacts pyruvate. The active-site Proton donor/acceptor is the Tyr-137. Lys-165 (schiff-base intermediate with substrate) is an active-site residue. Ile-207 contacts pyruvate.

It belongs to the DapA family. Homotetramer; dimer of dimers.

The protein resides in the cytoplasm. It carries out the reaction L-aspartate 4-semialdehyde + pyruvate = (2S,4S)-4-hydroxy-2,3,4,5-tetrahydrodipicolinate + H2O + H(+). The protein operates within amino-acid biosynthesis; L-lysine biosynthesis via DAP pathway; (S)-tetrahydrodipicolinate from L-aspartate: step 3/4. Functionally, catalyzes the condensation of (S)-aspartate-beta-semialdehyde [(S)-ASA] and pyruvate to 4-hydroxy-tetrahydrodipicolinate (HTPA). In Afipia carboxidovorans (strain ATCC 49405 / DSM 1227 / KCTC 32145 / OM5) (Oligotropha carboxidovorans), this protein is 4-hydroxy-tetrahydrodipicolinate synthase.